A 152-amino-acid polypeptide reads, in one-letter code: Deoxyuridine 5'-triphosphate nucleotidohydrolase (152 aa).

Substrate contacts are provided by residues 71 to 73 (RSG), Asn84, 88 to 90 (LID), and Met98.

The protein belongs to the dUTPase family. Mg(2+) serves as cofactor.

The enzyme catalyses dUTP + H2O = dUMP + diphosphate + H(+). It participates in pyrimidine metabolism; dUMP biosynthesis; dUMP from dCTP (dUTP route): step 2/2. Its function is as follows. This enzyme is involved in nucleotide metabolism: it produces dUMP, the immediate precursor of thymidine nucleotides and it decreases the intracellular concentration of dUTP so that uracil cannot be incorporated into DNA. This is Deoxyuridine 5'-triphosphate nucleotidohydrolase from Shewanella baltica (strain OS155 / ATCC BAA-1091).